Consider the following 467-residue polypeptide: Glycogen synthase kinase-3 (467 aa).

Residues 1-20 (MSSKDQILEKDKKETDDNGN) are compositionally biased toward basic and acidic residues. A disordered region spans residues 1-42 (MSSKDQILEKDKKETDDNGNKKTTTTTSSSSSSSSSSKPRSN). Positions 23–37 (TTTTTSSSSSSSSSS) are enriched in low complexity. A Protein kinase domain is found at 56–339 (YITEGVIGNG…PVEICAHPFF (284 aa)). Residues 62–70 (IGNGSFGVV) and K85 each bind ATP. The active-site Proton acceptor is the D179. Phosphotyrosine; by zakA is present on residues Y214 and Y220. Residues 400 to 467 (SSNQSSSSNS…TTTTTTTSNH (68 aa)) form a disordered region.

Belongs to the protein kinase superfamily. CMGC Ser/Thr protein kinase family. GSK-3 subfamily. It depends on Mg(2+) as a cofactor.

The enzyme catalyses L-seryl-[tau protein] + ATP = O-phospho-L-seryl-[tau protein] + ADP + H(+). It catalyses the reaction L-threonyl-[tau protein] + ATP = O-phospho-L-threonyl-[tau protein] + ADP + H(+). Its activity is regulated as follows. Inhibited by lithium. Lithium inhibition is competitive with respect to magnesium but non-competitive with respect to the peptide substrate. In terms of biological role, during cellular differentiation, may mediate an extracellular cyclic AMP stimulated signal transduction pathway that regulates prespore and prestalk B-cell proportions through inhibition of stalk cell formation and induction of prespore cell differentiation. The cAMP receptor carC appears to activate gskA via the tyrosine kinases zakA and zak2, to stimulate prespore differentiation, while carD appears to negatively regulate gskA, to promote prestalk formation. This Dictyostelium discoideum (Social amoeba) protein is Glycogen synthase kinase-3 (gskA).